A 320-amino-acid polypeptide reads, in one-letter code: Malate dehydrogenase (320 aa).

NAD(+)-binding positions include 10–15 (GSGMIG) and Asp-34. Substrate is bound by residues Arg-83 and Arg-89. Residues Asn-96 and 119-121 (ITN) each bind NAD(+). Substrate contacts are provided by Asn-121 and Arg-152. The Proton acceptor role is filled by His-176.

The protein belongs to the LDH/MDH superfamily. MDH type 3 family.

It carries out the reaction (S)-malate + NAD(+) = oxaloacetate + NADH + H(+). Functionally, catalyzes the reversible oxidation of malate to oxaloacetate. The sequence is that of Malate dehydrogenase from Allorhizobium ampelinum (strain ATCC BAA-846 / DSM 112012 / S4) (Agrobacterium vitis (strain S4)).